We begin with the raw amino-acid sequence, 256 residues long: Fat body protein 2 (256 aa).

NAD(+) is bound at residue 10–34; the sequence is VYVGSFSGIGWQMMMQLMQKDIKMM. Residue serine 138 coordinates substrate. The active-site Proton acceptor is the tyrosine 151.

This sequence belongs to the short-chain dehydrogenases/reductases (SDR) family.

The protein is Fat body protein 2 (Fbp2) of Drosophila melanogaster (Fruit fly).